Consider the following 192-residue polypeptide: Elongation factor P (192 aa).

K37 bears the N6-(3,6-diaminohexanoyl)-5-hydroxylysine mark.

This sequence belongs to the elongation factor P family. May be beta-lysylated on the epsilon-amino group of Lys-37 by the combined action of EpmA and EpmB, and then hydroxylated on the C5 position of the same residue by EpmC (if this protein is present). Lysylation is critical for the stimulatory effect of EF-P on peptide-bond formation. The lysylation moiety may extend toward the peptidyltransferase center and stabilize the terminal 3-CCA end of the tRNA. Hydroxylation of the C5 position on Lys-37 may allow additional potential stabilizing hydrogen-bond interactions with the P-tRNA.

The protein localises to the cytoplasm. The protein operates within protein biosynthesis; polypeptide chain elongation. In terms of biological role, involved in peptide bond synthesis. Alleviates ribosome stalling that occurs when 3 or more consecutive Pro residues or the sequence PPG is present in a protein, possibly by augmenting the peptidyl transferase activity of the ribosome. Modification of Lys-37 is required for alleviation. The sequence is that of Elongation factor P from Acinetobacter baylyi (strain ATCC 33305 / BD413 / ADP1).